Reading from the N-terminus, the 190-residue chain is Putative triphosphatase YjbK (190 aa).

Residues 4–189 enclose the CYTH domain; sequence EIEIEFKNML…LRFYEEKRKS (186 aa).

In Bacillus subtilis (strain 168), this protein is Putative triphosphatase YjbK (yjbK).